The sequence spans 404 residues: S-adenosylmethionine synthase (404 aa).

Residue His-17 coordinates ATP. Asp-19 is a binding site for Mg(2+). Glu-45 contacts K(+). The L-methionine site is built by Glu-58 and Gln-101. The flexible loop stretch occupies residues 101 to 111 (QSPDIAMGVDQ). Residues 177–179 (DGK), 244–245 (RF), Asp-253, 259–260 (RK), Ala-276, and Lys-280 each bind ATP. Asp-253 serves as a coordination point for L-methionine. Lys-284 contacts L-methionine.

This sequence belongs to the AdoMet synthase family. As to quaternary structure, homotetramer; dimer of dimers. Mg(2+) serves as cofactor. The cofactor is K(+).

It is found in the cytoplasm. It carries out the reaction L-methionine + ATP + H2O = S-adenosyl-L-methionine + phosphate + diphosphate. Its pathway is amino-acid biosynthesis; S-adenosyl-L-methionine biosynthesis; S-adenosyl-L-methionine from L-methionine: step 1/1. Catalyzes the formation of S-adenosylmethionine (AdoMet) from methionine and ATP. The overall synthetic reaction is composed of two sequential steps, AdoMet formation and the subsequent tripolyphosphate hydrolysis which occurs prior to release of AdoMet from the enzyme. This Geobacillus thermodenitrificans (strain NG80-2) protein is S-adenosylmethionine synthase.